Reading from the N-terminus, the 2800-residue chain is Probable serine/threonine-protein kinase roco5 (2800 aa).

Positions 1–61 (MEVIKKEKKD…EKEKDKEKDG (61 aa)) are enriched in basic and acidic residues. Disordered regions lie at residues 1–92 (MEVI…SAQS), 123–225 (TTTT…SPVD), and 417–437 (GINSANSNNNNNNSGGGSSGI). A compositionally biased stretch (pro residues) spans 77–86 (PTPPPPPPPS). 2 stretches are compositionally biased toward low complexity: residues 123 to 134 (TTTTTTTTSSNN) and 143 to 170 (NNNTSNNNINNNNKTSNTTGSNVSSSNN). The span at 176–190 (INVTSLDSGGNNNAS) shows a compositional bias: polar residues. Residues 194-218 (ISNEHSPKNRKEKEKEKDKDNKEDS) are compositionally biased toward basic and acidic residues. The 282-residue stretch at 227 to 508 (NRRKLVEGFM…VQVVKDIVNE (282 aa)) folds into the DH domain. A compositionally biased stretch (low complexity) spans 417-429 (GINSANSNNNNNN). Positions 540-649 (KFLKEGILIE…WFQVLSQASL (110 aa)) constitute a PH domain. 4 LRR repeats span residues 777–800 (NKSITHLTLSQNSINDPCAVALGD), 805–832 (NHSLIQMDLSENTIADKGLISLIDGILS), 834–856 (PSITVVILTQNQITDTGAKHISK), and 861–885 (NQTLNALFLEDNNITQSMGAEIIDQ). A disordered region spans residues 926 to 946 (KQLQVNQKSTTPSTSTSTTSS). A compositionally biased stretch (low complexity) spans 934–946 (STTPSTSTSTTSS). LRR repeat units lie at residues 971–984 (LNKLNMLSLDSRRI), 985–1007 (SDLKELYLDHNCISSIPVSILKE), 1008–1031 (LKNLQILDLSNNQLSSLPSEISEM), 1033–1056 (ELKLLNVSHNNLSSLPIELGTLCK), 1058–1077 (NHLDISFNFIETINVNSLSQ), 1078–1101 (LVNLKVLMMQRNYFNRLPIEIFTR), 1128–1151 (AIKATKLDLSDCGLSALPIEIGSI), 1152–1174 (SSLIELDLTNNRIKDLPPQIGKL), 1175–1197 (SSLQTLNLSNNAIESLPWQLSQL), and 1199–1222 (TLKVLNITGNPISFDGASNAKISI). The Roc domain maps to 1244–1464 (KEKPCMRMKL…NHIVKLGKAE (221 aa)). Residues 1257–1264 (GQENVGKT), 1348–1352 (DFAGQ), and 1407–1410 (THLD) each bind GTP. Residues 1473 to 1604 (RSYFQLENLI…KFEIVHPLPD (132 aa)) enclose the COR 1 domain. Disordered regions lie at residues 1605–1665 (PKAT…SLLN) and 1688–1711 (DQSTSPSNSTTPSPNTSSNNFSDS). Low complexity-rich tracts occupy residues 1610-1645 (SSSSSSPSTTQKSLNNSGSNLKSSGSAISTSSSSTT), 1653-1665 (RTNSTTNTTSLLN), and 1688-1707 (DQSTSPSNSTTPSPNTSSNN). Residues 1717–1790 (KSSTKHLVPI…VKEFWKNGLL (74 aa)) form the COR 2 domain. Residues 1886–2008 (SQQQHHQQQQ…LNPDSTSSSN (123 aa)) show a composition bias toward low complexity. Disordered stretches follow at residues 1886–2011 (SQQQ…NETS) and 2050–2070 (RNTNKPKINGTTGSGSSSSIV). Residues 2050-2059 (RNTNKPKING) are compositionally biased toward polar residues. The Protein kinase domain maps to 2175 to 2440 (LEIIEKVGEG…PTFIDIHSRL (266 aa)). ATP contacts are provided by residues 2181-2189 (VGEGGFGIV) and Lys2202. Asp2300 functions as the Proton acceptor in the catalytic mechanism. Composition is skewed to low complexity over residues 2452–2490 (TTTNSAKSTISTGFNSNSGATTTTKPKSSTISSGSGTTS), 2583–2654 (LKTP…SPIS), 2669–2685 (TTQTTSTPPTNQTPNPT), and 2694–2704 (SSLSSNSINKP). Disordered stretches follow at residues 2452 to 2498 (TTTN…HPQL) and 2544 to 2800 (AGGN…AIPK). A compositionally biased stretch (pro residues) spans 2705–2723 (PSKPLPTPGGVTSPPPPPT). The segment covering 2730 to 2756 (IKFNSISAGNKTIGQSSTLPSSTLKQF) has biased composition (polar residues). A compositionally biased stretch (low complexity) spans 2757-2787 (TANNNTSPSGSSSLPNSTVSSPSSSFLLRPT).

This sequence belongs to the protein kinase superfamily. TKL Ser/Thr protein kinase family. ROCO subfamily.

It carries out the reaction L-seryl-[protein] + ATP = O-phospho-L-seryl-[protein] + ADP + H(+). The catalysed reaction is L-threonyl-[protein] + ATP = O-phospho-L-threonyl-[protein] + ADP + H(+). May act as a serine/threonine-protein kinase and guanine-nucleotide releasing factor. This chain is Probable serine/threonine-protein kinase roco5 (roco5), found in Dictyostelium discoideum (Social amoeba).